Consider the following 158-residue polypeptide: Transcription elongation factor GreA (158 aa).

A coiled-coil region spans residues 45-73 (AEYHAAREQQSFIEGRIKQLESELSHAEI).

This sequence belongs to the GreA/GreB family.

Necessary for efficient RNA polymerase transcription elongation past template-encoded arresting sites. The arresting sites in DNA have the property of trapping a certain fraction of elongating RNA polymerases that pass through, resulting in locked ternary complexes. Cleavage of the nascent transcript by cleavage factors such as GreA or GreB allows the resumption of elongation from the new 3'terminus. GreA releases sequences of 2 to 3 nucleotides. This is Transcription elongation factor GreA from Xanthomonas axonopodis pv. citri (strain 306).